Here is a 374-residue protein sequence, read N- to C-terminus: Quinolinate synthase (374 aa).

Residues His-53 and Ser-70 each coordinate iminosuccinate. A [4Fe-4S] cluster-binding site is contributed by Cys-116. Residues 148 to 150 and Ser-169 contribute to the iminosuccinate site; that span reads YMN. [4Fe-4S] cluster is bound at residue Cys-236. Residues 262-264 and Thr-279 contribute to the iminosuccinate site; that span reads HPE. Position 327 (Cys-327) interacts with [4Fe-4S] cluster.

It belongs to the quinolinate synthase family. Type 3 subfamily. It depends on [4Fe-4S] cluster as a cofactor.

Its subcellular location is the cytoplasm. It catalyses the reaction iminosuccinate + dihydroxyacetone phosphate = quinolinate + phosphate + 2 H2O + H(+). It functions in the pathway cofactor biosynthesis; NAD(+) biosynthesis; quinolinate from iminoaspartate: step 1/1. In terms of biological role, catalyzes the condensation of iminoaspartate with dihydroxyacetone phosphate to form quinolinate. This chain is Quinolinate synthase, found in Halobacterium salinarum (strain ATCC 29341 / DSM 671 / R1).